We begin with the raw amino-acid sequence, 352 residues long: Photosystem II D2 protein (352 aa).

Residues 1-31 (MTIAVGRAPVERGWFDVLDDWLKRDRFVFIG) lie on the Cytoplasmic side of the membrane. Residues 32–53 (WSGLLLFPCAFMALGGWLTGTT) traverse the membrane as a helical segment. Topologically, residues 54-108 (FVTSWYTHGLASSYLEGANFLTVAVSSPADAFGHSLLFLWGPEAQGNLTRWFQIG) are lumenal, thylakoid. Residues 109–131 (GLWPFVALHGAFGLIGFMLRQFE) form a helical membrane-spanning segment. H117 provides a ligand contact to chlorophyll a. Q129 contacts pheophytin a. Residues 132–140 (ISRLVGIRP) lie on the Cytoplasmic side of the membrane. Residues 141 to 162 (YNAIAFSGPIAVFVSVFLMYPL) form a helical membrane-spanning segment. N142 contributes to the pheophytin a binding site. Topologically, residues 163-190 (GQSSWFFAPSFGVAGIFRFILFLQGFHN) are lumenal, thylakoid. Residues 191-217 (WTLNPFHMMGVAGILGGALLCAIHGAT) form a helical membrane-spanning segment. Residue H197 coordinates chlorophyll a. Residues H214 and F261 each contribute to the a plastoquinone site. H214 lines the Fe cation pocket. Topologically, residues 218–265 (VENTLFEDGEDSNTFRAFEPTQAEETYSMVTANRFWSQIFGIAFSNKR) are cytoplasmic. The helical transmembrane segment at 266-288 (WLHFFMLFVPVTGLWMSSVGIVG) threads the bilayer. H268 lines the Fe cation pocket. Residues 289–352 (LALNLRAYDF…EEVLPRGNAL (64 aa)) are Lumenal, thylakoid-facing.

This sequence belongs to the reaction center PufL/M/PsbA/D family. As to quaternary structure, PSII is composed of 1 copy each of membrane proteins PsbA, PsbB, PsbC, PsbD, PsbE, PsbF, PsbH, PsbI, PsbJ, PsbK, PsbL, PsbM, PsbT, PsbX, PsbY, PsbZ, Psb30/Ycf12, peripheral proteins PsbO, CyanoQ (PsbQ), PsbU, PsbV and a large number of cofactors. It forms dimeric complexes. The D1/D2 heterodimer binds P680, chlorophylls that are the primary electron donor of PSII, and subsequent electron acceptors. It shares a non-heme iron and each subunit binds pheophytin, quinone, additional chlorophylls, carotenoids and lipids. There is also a Cl(-1) ion associated with D1 and D2, which is required for oxygen evolution. The PSII complex binds additional chlorophylls, carotenoids and specific lipids. is required as a cofactor.

The protein localises to the cellular thylakoid membrane. The enzyme catalyses 2 a plastoquinone + 4 hnu + 2 H2O = 2 a plastoquinol + O2. Functionally, photosystem II (PSII) is a light-driven water:plastoquinone oxidoreductase that uses light energy to abstract electrons from H(2)O, generating O(2) and a proton gradient subsequently used for ATP formation. It consists of a core antenna complex that captures photons, and an electron transfer chain that converts photonic excitation into a charge separation. The D1/D2 (PsbA/PsbD) reaction center heterodimer binds P680, the primary electron donor of PSII as well as several subsequent electron acceptors. D2 is needed for assembly of a stable PSII complex. This Synechocystis sp. (strain ATCC 27184 / PCC 6803 / Kazusa) protein is Photosystem II D2 protein.